We begin with the raw amino-acid sequence, 525 residues long: GMP synthase [glutamine-hydrolyzing] (525 aa).

A Glutamine amidotransferase type-1 domain is found at 9–207 (RILILDFGSQ…ILDICGCEAL (199 aa)). Catalysis depends on C86, which acts as the Nucleophile. Residues H181 and E183 contribute to the active site. The GMPS ATP-PPase domain maps to 208–400 (WTPSKIAEDA…LGLPYDMVYR (193 aa)). 235–241 (SGGVDSS) lines the ATP pocket.

As to quaternary structure, homodimer.

The enzyme catalyses XMP + L-glutamine + ATP + H2O = GMP + L-glutamate + AMP + diphosphate + 2 H(+). Its pathway is purine metabolism; GMP biosynthesis; GMP from XMP (L-Gln route): step 1/1. Its function is as follows. Catalyzes the synthesis of GMP from XMP. In Pseudomonas syringae pv. syringae (strain B728a), this protein is GMP synthase [glutamine-hydrolyzing].